The sequence spans 179 residues: Large ribosomal subunit protein uL5 (179 aa).

Belongs to the universal ribosomal protein uL5 family. As to quaternary structure, part of the 50S ribosomal subunit; part of the 5S rRNA/L5/L18/L25 subcomplex. Contacts the 5S rRNA and the P site tRNA. Forms a bridge to the 30S subunit in the 70S ribosome.

This is one of the proteins that bind and probably mediate the attachment of the 5S RNA into the large ribosomal subunit, where it forms part of the central protuberance. In the 70S ribosome it contacts protein S13 of the 30S subunit (bridge B1b), connecting the 2 subunits; this bridge is implicated in subunit movement. Contacts the P site tRNA; the 5S rRNA and some of its associated proteins might help stabilize positioning of ribosome-bound tRNAs. The polypeptide is Large ribosomal subunit protein uL5 (Desulfosudis oleivorans (strain DSM 6200 / JCM 39069 / Hxd3) (Desulfococcus oleovorans)).